A 206-amino-acid chain; its full sequence is Guanylate kinase (206 aa).

Residues 6-184 (GNLFILSAPS…ALTDIETIVM (179 aa)) enclose the Guanylate kinase-like domain. 13–20 (APSGAGKS) contributes to the ATP binding site.

Belongs to the guanylate kinase family.

It localises to the cytoplasm. The catalysed reaction is GMP + ATP = GDP + ADP. Essential for recycling GMP and indirectly, cGMP. The protein is Guanylate kinase of Pseudoalteromonas translucida (strain TAC 125).